The chain runs to 141 residues: Cystatin-13 (141 aa).

The N-terminal stretch at methionine 1–alanine 24 is a signal peptide. Residues glutamine 76–serine 80 are secondary area of contact. 2 cysteine pairs are disulfide-bonded: cysteine 94–cysteine 104 and cysteine 118–cysteine 138.

This sequence belongs to the cystatin family. As to expression, expressed exclusively in testis. Found in spermatagonia, spermatocytes, round spermatids, elongating spermatids and spermatozoa.

Its subcellular location is the secreted. It localises to the cytoplasm. Functionally, may perform a specialized role during sperm development and maturation. The protein is Cystatin-13 of Mus musculus (Mouse).